A 289-amino-acid chain; its full sequence is BTB/POZ domain-containing protein KCTD7 (289 aa).

Positions 1-42 are disordered; it reads MVVVNGREPDSRHSDGAMSSSEAEDDFLEPATPTATQAGHGL. The BTB domain occupies 53-141; the sequence is VPLNIGGAHF…YAIGPLLEQL (89 aa).

As to quaternary structure, interacts with CUL3.

The protein localises to the cell membrane. It is found in the cytoplasm. Its subcellular location is the cytosol. In terms of biological role, may be involved in the control of excitability of cortical neurons. The protein is BTB/POZ domain-containing protein KCTD7 (Kctd7) of Rattus norvegicus (Rat).